The primary structure comprises 235 residues: Sugar fermentation stimulation protein homolog (235 aa).

This sequence belongs to the SfsA family.

The chain is Sugar fermentation stimulation protein homolog from Alkaliphilus oremlandii (strain OhILAs) (Clostridium oremlandii (strain OhILAs)).